We begin with the raw amino-acid sequence, 68 residues long: Large ribosomal subunit protein bL35 (68 aa).

This sequence belongs to the bacterial ribosomal protein bL35 family.

In Rickettsia canadensis (strain McKiel), this protein is Large ribosomal subunit protein bL35.